Consider the following 146-residue polypeptide: Hemoglobin subunit beta-C (146 aa).

A Globin domain is found at 2–146; it reads EWTDFERATI…VVSSLGRQYH (145 aa). The heme b site is built by H63 and H92.

It belongs to the globin family. HbC is a heterotetramer of two alpha chains and two beta-C chains. Red blood cells.

In terms of biological role, involved in oxygen transport from gills to the various peripheral tissues. This chain is Hemoglobin subunit beta-C (hbbc), found in Trematomus bernacchii (Emerald rockcod).